Consider the following 304-residue polypeptide: MSAFPPPPEPDAPRVAHVEPAPDAVRGILALADRARADDGVAPFNEQTRLTLGADGGPTLLLAHGTDDDPLGAAVVAHGDAGIEAELVVDPAHRRRGVGRALLDAVLAEAAGSPVSVWAHGDHPAARALADATGLDRARELLQLRASVAEARTGLGERQMPAGVALSSFTADDADDWVALNARAFASHPEQGRMTRGDLDDRVAEAWFDPASLLLARDADGRLAGFHWLKVDGGQAEVYVLGVDPDRAARGLGSALLAAGLDLLAERGHDEVDLYVEADNTPALALYRRAAFRDAAVDVQYRRA.

2 N-acetyltransferase domains span residues 16 to 155 and 164 to 304; these read AHVE…RTGL and VALS…YRRA. Position 46 (Glu-46) interacts with 1D-myo-inositol 2-(L-cysteinylamino)-2-deoxy-alpha-D-glucopyranoside. Acetyl-CoA is bound at residue 87–89; the sequence is LVV. 3 residues coordinate 1D-myo-inositol 2-(L-cysteinylamino)-2-deoxy-alpha-D-glucopyranoside: Glu-190, Lys-230, and Glu-237. Acetyl-CoA-binding positions include 241–243 and 248–254; these read LGV and AARGLGS. 1D-myo-inositol 2-(L-cysteinylamino)-2-deoxy-alpha-D-glucopyranoside is bound at residue Tyr-275.

Belongs to the acetyltransferase family. MshD subfamily. As to quaternary structure, monomer.

The catalysed reaction is 1D-myo-inositol 2-(L-cysteinylamino)-2-deoxy-alpha-D-glucopyranoside + acetyl-CoA = mycothiol + CoA + H(+). Functionally, catalyzes the transfer of acetyl from acetyl-CoA to desacetylmycothiol (Cys-GlcN-Ins) to form mycothiol. The sequence is that of Mycothiol acetyltransferase from Clavibacter sepedonicus (Clavibacter michiganensis subsp. sepedonicus).